A 509-amino-acid polypeptide reads, in one-letter code: MILPWLILIPFIGGFLCWIAEHSSKTLPRWIALLSMTLVLILSLWIWATGDFQLAPAPGGEPEWTLQFKVLWIERLGISIHLAMDGLSLLMVALTGLLGVLSVLCSWNEIQRRIGFFHLNLLWILGGVIGVFLAIDLFLFFFFWEMMLVPMYFLIALWGHSSDDGKKTRIYAATKFFIFTQASGLVMLVAILGLVFVNFNATGVITFDYATLLKTQLSPHVEWLLMLGFFVAFAVKMPVVPVHSWLPDAHAQAPTAGSVDLAGILLKTAAYGLIRFALPLFPNASAEFAPIAMWLGIIGIFYGALLSFAQTDIKRLVAYSSVSHMGFVMIGIYSGSQVALQGVVVQMIAHGLSAAALFILCGQLYERLHTRDMRKMGGLWSRMPYLPAISLFFASASLGLPGTGNFVGEFLILIGAFKVVPVIIVIATFGLVFASVYSLIMIHRAYFGPSQSDEPILGLDARELSMVLGLAVLLVLLGVYPQPVLDISAASMHGVQQWLGAALSTLAGR.

13 helical membrane passes run 1 to 21 (MILP…WIAE), 30 to 50 (WIAL…WATG), 87 to 107 (LSLL…LCSW), 123 to 143 (WILG…FFFF), 176 to 196 (FFIF…GLVF), 223 to 243 (WLLM…VPVH), 261 to 281 (LAGI…LPLF), 288 to 308 (FAPI…LLSF), 316 to 336 (LVAY…YSGS), 342 to 362 (GVVV…ILCG), 376 to 396 (MGGL…FASA), 422 to 442 (VIIV…LIMI), and 467 to 487 (VLGL…VLDI).

Belongs to the complex I subunit 4 family. Composed of 13 different subunits. Subunits NuoA, H, J, K, L, M, N constitute the membrane sector of the complex.

It is found in the cell inner membrane. The catalysed reaction is a quinone + NADH + 5 H(+)(in) = a quinol + NAD(+) + 4 H(+)(out). Its function is as follows. NDH-1 shuttles electrons from NADH, via FMN and iron-sulfur (Fe-S) centers, to quinones in the respiratory chain. The immediate electron acceptor for the enzyme in this species is believed to be ubiquinone. Couples the redox reaction to proton translocation (for every two electrons transferred, four hydrogen ions are translocated across the cytoplasmic membrane), and thus conserves the redox energy in a proton gradient. This Pseudomonas aeruginosa (strain ATCC 15692 / DSM 22644 / CIP 104116 / JCM 14847 / LMG 12228 / 1C / PRS 101 / PAO1) protein is NADH-quinone oxidoreductase subunit M (nuoM).